The chain runs to 164 residues: Pleckstrin homology domain-containing family J member 1 (164 aa).

The region spanning 15–108 is the PH domain; sequence PAEMAAELGM…WMEALQRASY (94 aa).

The sequence is that of Pleckstrin homology domain-containing family J member 1 (Plekhj1) from Mus musculus (Mouse).